A 347-amino-acid polypeptide reads, in one-letter code: GMP reductase (347 aa).

A108 to A131 lines the NADP(+) pocket. Residues G181 and G183 each contribute to the K(+) site. The Thioimidate intermediate role is filled by C186. I216 to V239 serves as a coordination point for NADP(+).

It belongs to the IMPDH/GMPR family. GuaC type 1 subfamily. In terms of assembly, homotetramer.

The enzyme catalyses IMP + NH4(+) + NADP(+) = GMP + NADPH + 2 H(+). In terms of biological role, catalyzes the irreversible NADPH-dependent deamination of GMP to IMP. It functions in the conversion of nucleobase, nucleoside and nucleotide derivatives of G to A nucleotides, and in maintaining the intracellular balance of A and G nucleotides. The polypeptide is GMP reductase (Vibrio campbellii (strain ATCC BAA-1116)).